We begin with the raw amino-acid sequence, 90 residues long: U7-theraphotoxin-Hhn1h (90 aa).

The N-terminal stretch at 1-19 is a signal peptide; the sequence is MKTAIFTVVLALAVFAVLS. A propeptide spanning residues 20–50 is cleaved from the precursor; the sequence is FGWEANEKALSEEFTELIHEKEAASETEARE. Intrachain disulfides connect Cys51-Cys65, Cys58-Cys70, and Cys64-Cys81.

This sequence belongs to the neurotoxin 10 (Hwtx-1) family. 13 (Hntx-13) subfamily. In terms of tissue distribution, expressed by the venom gland.

It is found in the secreted. In terms of biological role, ion channel inhibitor. In Cyriopagopus hainanus (Chinese bird spider), this protein is U7-theraphotoxin-Hhn1h.